Reading from the N-terminus, the 266-residue chain is 4-hydroxy-tetrahydrodipicolinate reductase (266 aa).

Residue 10 to 15 participates in NAD(+) binding; sequence GPRGRM. Residue Lys-38 participates in NADP(+) binding. NAD(+) is bound by residues 99-101 and 125-128; these read GTT and APNF. Residue His-155 is the Proton donor/acceptor of the active site. His-156 lines the (S)-2,3,4,5-tetrahydrodipicolinate pocket. The Proton donor role is filled by Lys-159. 165-166 serves as a coordination point for (S)-2,3,4,5-tetrahydrodipicolinate; sequence GT.

This sequence belongs to the DapB family.

Its subcellular location is the cytoplasm. It catalyses the reaction (S)-2,3,4,5-tetrahydrodipicolinate + NAD(+) + H2O = (2S,4S)-4-hydroxy-2,3,4,5-tetrahydrodipicolinate + NADH + H(+). The enzyme catalyses (S)-2,3,4,5-tetrahydrodipicolinate + NADP(+) + H2O = (2S,4S)-4-hydroxy-2,3,4,5-tetrahydrodipicolinate + NADPH + H(+). The protein operates within amino-acid biosynthesis; L-lysine biosynthesis via DAP pathway; (S)-tetrahydrodipicolinate from L-aspartate: step 4/4. In terms of biological role, catalyzes the conversion of 4-hydroxy-tetrahydrodipicolinate (HTPA) to tetrahydrodipicolinate. In Bacillus cereus (strain ZK / E33L), this protein is 4-hydroxy-tetrahydrodipicolinate reductase.